A 72-amino-acid chain; its full sequence is C-hordein (72 aa).

The segment covering 1–36 (FPQPQEPFPQQPQQPFPLQPQQPFPQQPQQPFPQPQ) has biased composition (pro residues). The disordered stretch occupies residues 1 to 61 (FPQPQEPFPQ…QQPFPLQPHQ (61 aa)). Residues 37 to 50 (QPFRQQAELIIPQQ) show a composition bias toward low complexity.

As to expression, developing endosperm.

Sulfur-poor seed storage protein. The polypeptide is C-hordein (Hordeum vulgare (Barley)).